The primary structure comprises 656 residues: Broad substrate specificity ATP-binding cassette transporter ABCG2 (656 aa).

Residues 1 to 25 are disordered; it reads MSSNSYQVSIPMSKRNTNGLPGSSS. The Cytoplasmic segment spans residues 1-394; that stretch reads MSSNSYQVSI…SFKNLLGNPQ (394 aa). One can recognise an ABC transporter domain in the interval 37–286; sequence LSFHDICYRV…FASIGYNCEP (250 aa). Residues 80-87, 184-190, Glu211, and His243 each bind ATP; these read GPTGGGKS and RGVSGGE. The 263-residue stretch at 390–652 folds into the ABC transmembrane type-2 domain; the sequence is LGNPQASVAQ…TIAYLKLLLL (263 aa). A helical membrane pass occupies residues 395 to 415; the sequence is ASVAQIIVTIILGLVIGAIFY. Residues 416–429 are Extracellular-facing; that stretch reads DLKNDPSGIQNRAG. A helical transmembrane segment spans residues 430–450; sequence VLFFLTTNQCFSSVSAVELLV. At 451-478 the chain is on the cytoplasmic side; that stretch reads VEKKLFIHEYISGYYRVSSYFFGKLLSD. The chain crosses the membrane as a helical span at residues 479–498; sequence LLPMRMLPSIIFTCITYFLL. Residues 499 to 507 lie on the Extracellular side of the membrane; the sequence is GLKPAVGSF. The helical transmembrane segment at 508–530 threads the bilayer; the sequence is FIMMFTLMMVAYSASSMALAIAA. The Cytoplasmic segment spans residues 531-536; the sequence is GQSVVS. The helical transmembrane segment at 537-557 threads the bilayer; it reads VATLLMTISFVFMMIFSGLLV. The Extracellular segment spans residues 558–631; sequence NLKTVVPWLS…LSAWGLWQNH (74 aa). Cysteines 593 and 609 form a disulfide. 2 N-linked (GlcNAc...) asparagine glycosylation sites follow: Asn597 and Asn601. Residues 632 to 652 traverse the membrane as a helical segment; it reads VALACMMVIFLTIAYLKLLLL. Residues 653–656 lie on the Cytoplasmic side of the membrane; it reads KKYS.

The protein belongs to the ABC transporter superfamily. ABCG family. Eye pigment precursor importer (TC 3.A.1.204) subfamily. Homodimer; disulfide-linked. The minimal functional unit is a homodimer, but the major oligomeric form in plasma membrane is a homotetramer with possibility of higher order oligomerization up to homododecamers. In terms of processing, N-glycosylated. Glycosylation-deficient ABCG2 is normally expressed and functional. Post-translationally, phosphorylated. Phosphorylation may regulate the localization to the plasma membrane, the homooligomerization and therefore, the activity of the transporter. As to expression, high expression in brain, kidney and lung. Also expressed in livere, colon, small intestine, heart, skeletal muscle, spleen, stomach and pancreas.

It localises to the cell membrane. Its subcellular location is the apical cell membrane. The protein resides in the mitochondrion membrane. The catalysed reaction is ATP + H2O + xenobioticSide 1 = ADP + phosphate + xenobioticSide 2.. The enzyme catalyses urate(in) + ATP + H2O = urate(out) + ADP + phosphate + H(+). It carries out the reaction indoxyl sulfate(in) + ATP + H2O = indoxyl sulfate(out) + ADP + phosphate + H(+). It catalyses the reaction sphing-4-enine 1-phosphate(in) + ATP + H2O = sphing-4-enine 1-phosphate(out) + ADP + phosphate + H(+). The catalysed reaction is estrone 3-sulfate(in) + ATP + H2O = estrone 3-sulfate(out) + ADP + phosphate + H(+). The enzyme catalyses dehydroepiandrosterone 3-sulfate(in) + ATP + H2O = dehydroepiandrosterone 3-sulfate(out) + ADP + phosphate + H(+). It carries out the reaction 4-methylumbelliferone sulfate(in) + ATP + H2O = 4-methylumbelliferone sulfate(out) + ADP + phosphate + H(+). It catalyses the reaction 5,7-dimethyl-2-methylamino-4-(3-pyridylmethyl)-1,3-benzothiazol-6-yl beta-D-glucuronate(in) + ATP + H2O = 5,7-dimethyl-2-methylamino-4-(3-pyridylmethyl)-1,3-benzothiazol-6-yl beta-D-glucuronate(out) + ADP + phosphate + H(+). The catalysed reaction is 4-methylumbelliferone beta-D-glucuronate(in) + ATP + H2O = 4-methylumbelliferone beta-D-glucuronate(out) + ADP + phosphate + H(+). The enzyme catalyses 5,7-dimethyl-2-methylamino-4-(3-pyridylmethyl)-1,3-benzothiazol-6-yl sulfate(in) + ATP + H2O = 5,7-dimethyl-2-methylamino-4-(3-pyridylmethyl)-1,3-benzothiazol-6-yl sulfate(out) + ADP + phosphate + H(+). It carries out the reaction 17beta-estradiol 17-O-(beta-D-glucuronate)(in) + ATP + H2O = 17beta-estradiol 17-O-(beta-D-glucuronate)(out) + ADP + phosphate + H(+). It catalyses the reaction methotrexate(in) + ATP + H2O = methotrexate(out) + ADP + phosphate + H(+). The catalysed reaction is riboflavin(in) + ATP + H2O = riboflavin(out) + ADP + phosphate + H(+). The enzyme catalyses pheophorbide a(in) + ATP + H2O = pheophorbide a(out) + ADP + phosphate + H(+). It carries out the reaction itaconate(in) + ATP + H2O = itaconate(out) + ADP + phosphate + H(+). Its function is as follows. Broad substrate specificity ATP-dependent transporter of the ATP-binding cassette (ABC) family that actively extrudes a wide variety of physiological compounds, dietary toxins and xenobiotics from cells. Involved in porphyrin homeostasis, mediating the export of protoporphyrin IX (PPIX) from both mitochondria to cytosol and cytosol to extracellular space, it also functions in the cellular export of heme. Also mediates the efflux of sphingosine-1-P from cells. Acts as a urate exporter functioning in both renal and extrarenal urate excretion. In kidney, it also functions as a physiological exporter of the uremic toxin indoxyl sulfate. Also involved in the excretion of steroids like estrone 3-sulfate/E1S, 3beta-sulfooxy-androst-5-en-17-one/DHEAS, and other sulfate conjugates. Mediates the secretion of the riboflavin and biotin vitamins into milk. Extrudes pheophorbide a, a phototoxic porphyrin catabolite of chlorophyll, reducing its bioavailability. Plays an important role in the exclusion of xenobiotics from the brain. It confers to cells a resistance to multiple drugs and other xenobiotics including mitoxantrone, pheophorbide, camptothecin, methotrexate, azidothymidine, and the anthracyclines daunorubicin and doxorubicin, through the control of their efflux. In placenta, it limits the penetration of drugs from the maternal plasma into the fetus. May play a role in early stem cell self-renewal by blocking differentiation. In inflammatory macrophages, exports itaconate from the cytosol to the extracellular compartment and limits the activation of TFEB-dependent lysosome biogenesis involved in antibacterial innate immune response. The chain is Broad substrate specificity ATP-binding cassette transporter ABCG2 (ABCG2) from Sus scrofa (Pig).